The chain runs to 608 residues: DNA mismatch repair protein MutL (608 aa).

Belongs to the DNA mismatch repair MutL/HexB family.

This protein is involved in the repair of mismatches in DNA. It is required for dam-dependent methyl-directed DNA mismatch repair. May act as a 'molecular matchmaker', a protein that promotes the formation of a stable complex between two or more DNA-binding proteins in an ATP-dependent manner without itself being part of a final effector complex. The sequence is that of DNA mismatch repair protein MutL from Anoxybacillus flavithermus (strain DSM 21510 / WK1).